We begin with the raw amino-acid sequence, 287 residues long: Protease HtpX (287 aa).

2 consecutive transmembrane segments (helical) span residues 4 to 24 (VFLLIATNLAILLVASIVMSI) and 33 to 53 (GGLLVFAAIFGFGGSFISLAI). His139 is a Zn(2+) binding site. Residue Glu140 is part of the active site. His143 is a binding site for Zn(2+). 2 helical membrane-spanning segments follow: residues 154–174 (LIQGVVNTFVIFAARVVAGII) and 195–215 (GVVFVLDMLFGILASIIVAYF). Residue Glu220 participates in Zn(2+) binding.

Belongs to the peptidase M48B family. The cofactor is Zn(2+).

It is found in the cell inner membrane. The chain is Protease HtpX from Shewanella denitrificans (strain OS217 / ATCC BAA-1090 / DSM 15013).